The sequence spans 98 residues: Small ribosomal subunit protein uS17B (98 aa).

Belongs to the universal ribosomal protein uS17 family. Part of the 30S ribosomal subunit.

In terms of biological role, one of the primary rRNA binding proteins, it binds specifically to the 5'-end of 16S ribosomal RNA. In Bacteroides thetaiotaomicron (strain ATCC 29148 / DSM 2079 / JCM 5827 / CCUG 10774 / NCTC 10582 / VPI-5482 / E50), this protein is Small ribosomal subunit protein uS17B.